Reading from the N-terminus, the 228-residue chain is Demethylmenaquinone methyltransferase (228 aa).

Residues T62, D80, 100–101, and S117 contribute to the S-adenosyl-L-methionine site; that span reads DA.

The protein belongs to the class I-like SAM-binding methyltransferase superfamily. MenG/UbiE family.

The catalysed reaction is a 2-demethylmenaquinol + S-adenosyl-L-methionine = a menaquinol + S-adenosyl-L-homocysteine + H(+). It participates in quinol/quinone metabolism; menaquinone biosynthesis; menaquinol from 1,4-dihydroxy-2-naphthoate: step 2/2. Methyltransferase required for the conversion of demethylmenaquinol (DMKH2) to menaquinol (MKH2). This is Demethylmenaquinone methyltransferase from Mycolicibacterium gilvum (strain PYR-GCK) (Mycobacterium gilvum (strain PYR-GCK)).